Here is a 638-residue protein sequence, read N- to C-terminus: ATP-dependent zinc metalloprotease FtsH (638 aa).

Over 1–4 (MNNQ) the chain is Cytoplasmic. A helical membrane pass occupies residues 5–25 (GKNIIVWAVIFVFVILLFNVF). Residues 26–103 (QSDGLLSSKN…VVPPETRMNT (78 aa)) lie on the Periplasmic side of the membrane. Residues 104–124 (FLSFLISWFPMLLLIGVWVFF) traverse the membrane as a helical segment. Topologically, residues 125–638 (MRQMHGGGKA…PIKAKKEDKS (514 aa)) are cytoplasmic. 195-202 (GPPGTGKT) lines the ATP pocket. H417 contributes to the Zn(2+) binding site. E418 is an active-site residue. Residues H421 and D495 each coordinate Zn(2+). Positions 523 to 544 (SASEDMYTNRNSSSDRSESTSE) are disordered.

In the central section; belongs to the AAA ATPase family. This sequence in the C-terminal section; belongs to the peptidase M41 family. In terms of assembly, homohexamer. Zn(2+) is required as a cofactor.

It is found in the cell inner membrane. Its function is as follows. Acts as a processive, ATP-dependent zinc metallopeptidase for both cytoplasmic and membrane proteins. Plays a role in the quality control of integral membrane proteins. The chain is ATP-dependent zinc metalloprotease FtsH from Rickettsia bellii (strain RML369-C).